Reading from the N-terminus, the 334-residue chain is H-2 class I histocompatibility antigen, Q7 alpha chain (334 aa).

An N-terminal signal peptide occupies residues 1-21; that stretch reads MALTMLLLLVAAALTLIETRA. The interval 22–111 is alpha-1; sequence GQHSLQYFHT…AQSYYNQSKG (90 aa). The Extracellular segment spans residues 22–310; it reads GQHSLQYFHT…PPYTVSNMAT (289 aa). An N-linked (GlcNAc...) asparagine glycan is attached at Asn-107. Residues 112 to 203 form an alpha-2 region; the sequence is GSHTLQWMYG…QLGKETLLRT (92 aa). 2 cysteine pairs are disulfide-bonded: Cys-122–Cys-185 and Cys-224–Cys-280. Residues 204–295 are alpha-3; that stretch reads DPPKAHVTHH…GLPEPLTLRW (92 aa). One can recognise an Ig-like C1-type domain in the interval 206–294; it reads PKAHVTHHPR…EGLPEPLTLR (89 aa). The N-linked (GlcNAc...) asparagine glycan is linked to Asn-277. Positions 296–310 are connecting peptide; the sequence is GRWEPPPYTVSNMAT. A helical transmembrane segment spans residues 311–332; it reads IAVVVDLGAVAIIGAVVAFVMN.

It belongs to the MHC class I family. Heterodimer of an alpha chain and a beta chain (beta-2-microglobulin).

The protein localises to the membrane. In terms of biological role, involved in the presentation of foreign antigens to the immune system. The chain is H-2 class I histocompatibility antigen, Q7 alpha chain (H2-Q7) from Mus musculus (Mouse).